Reading from the N-terminus, the 233-residue chain is Large ribosomal subunit protein uL1 (233 aa).

It belongs to the universal ribosomal protein uL1 family. In terms of assembly, part of the 50S ribosomal subunit.

Functionally, binds directly to 23S rRNA. The L1 stalk is quite mobile in the ribosome, and is involved in E site tRNA release. In terms of biological role, protein L1 is also a translational repressor protein, it controls the translation of the L11 operon by binding to its mRNA. This is Large ribosomal subunit protein uL1 from Polynucleobacter asymbioticus (strain DSM 18221 / CIP 109841 / QLW-P1DMWA-1) (Polynucleobacter necessarius subsp. asymbioticus).